The sequence spans 429 residues: MLSMQVVSLISLLVSVCLAQPLPLSKRYFEYENYKVRGVNLGGWLVLEPFITPSLFETFRTNEYNDDGIPYDEYHYCQYLGEDLARDRLKQHWSTWITEADFEDISNTGLNTVRIPIGYWAFELLDDDPYVSGLQEAYLDQAIEWARSYGLKVWVDLHGAPGSQNGFDNSGLRDQVEFQQDGNWDVFKNVLAYVIEKYSRDEFTDTVVGVEVLNEPLGPVIDMDKLKELYNWAYDYLRNDLQRDQILVIHDAFQKANYFDDQLTVEQGAFGVLVDHHHYQVFSPEEVGRTIDEHISVVCEQGKETLTEAHWNVVGEWSAALTDCTKWLNGVGIGARYDGSFVKNQDTSYWIGSCEGSQDISTWTSDKKDNYRKYIEAQLDAYEIRNGWIYWCYKTEDTLEWDYRKLVQSGLFPQPLTNRQFPNQCSSTY.

The signal sequence occupies residues 1–19; it reads MLSMQVVSLISLLVSVCLA. The propeptide occupies 20-27; that stretch reads QPLPLSKR. Residue glutamate 215 is the Proton donor of the active site. Disulfide bonds link cysteine 299–cysteine 425 and cysteine 324–cysteine 354. Catalysis depends on glutamate 316, which acts as the Nucleophile.

This sequence belongs to the glycosyl hydrolase 5 (cellulase A) family.

It localises to the secreted. It carries out the reaction Successive hydrolysis of beta-D-glucose units from the non-reducing ends of (1-&gt;3)-beta-D-glucans, releasing alpha-glucose.. Functionally, beta-glucanases participate in the metabolism of beta-glucan, the main structural component of the cell wall. It could also function biosynthetically as a transglycosylase. This Kluyveromyces lactis (strain ATCC 8585 / CBS 2359 / DSM 70799 / NBRC 1267 / NRRL Y-1140 / WM37) (Yeast) protein is Glucan 1,3-beta-glucosidase.